A 359-amino-acid chain; its full sequence is Tropomodulin-1 (359 aa).

Residues 36-61 (ELDPDNALLPAGLRQKDQTTKAPTGP) are disordered. The segment at 39-138 (PDNALLPAGL…CDIAAILGMH (100 aa)) is tropomyosin-binding.

Belongs to the tropomodulin family. As to quaternary structure, binds to the N-terminus of tropomyosin and to actin. Interacts with FLII. Highly expressed in the erythrocyte, heart and skeletal muscle.

It localises to the cytoplasm. The protein resides in the cytoskeleton. Its function is as follows. Blocks the elongation and depolymerization of the actin filaments at the pointed end. The Tmod/TM complex contributes to the formation of the short actin protofilament, which in turn defines the geometry of the membrane skeleton. This chain is Tropomodulin-1 (Tmod1), found in Mus musculus (Mouse).